A 544-amino-acid polypeptide reads, in one-letter code: ATP synthase subunit alpha (544 aa).

Glycine 173 to threonine 180 serves as a coordination point for ATP. The segment at glycine 513–glycine 544 is disordered. Residues proline 524–glutamine 535 show a composition bias toward acidic residues.

Belongs to the ATPase alpha/beta chains family. In terms of assembly, F-type ATPases have 2 components, CF(1) - the catalytic core - and CF(0) - the membrane proton channel. CF(1) has five subunits: alpha(3), beta(3), gamma(1), delta(1), epsilon(1). CF(0) has three main subunits: a(1), b(2) and c(9-12). The alpha and beta chains form an alternating ring which encloses part of the gamma chain. CF(1) is attached to CF(0) by a central stalk formed by the gamma and epsilon chains, while a peripheral stalk is formed by the delta and b chains.

The protein resides in the cell membrane. The enzyme catalyses ATP + H2O + 4 H(+)(in) = ADP + phosphate + 5 H(+)(out). Produces ATP from ADP in the presence of a proton gradient across the membrane. The alpha chain is a regulatory subunit. The chain is ATP synthase subunit alpha from Beutenbergia cavernae (strain ATCC BAA-8 / DSM 12333 / CCUG 43141 / JCM 11478 / NBRC 16432 / NCIMB 13614 / HKI 0122).